We begin with the raw amino-acid sequence, 187 residues long: Peptidyl-tRNA hydrolase (187 aa).

TRNA is bound at residue Tyr-18. The active-site Proton acceptor is the His-23. Positions 65, 67, and 113 each coordinate tRNA.

Belongs to the PTH family. In terms of assembly, monomer.

It is found in the cytoplasm. It carries out the reaction an N-acyl-L-alpha-aminoacyl-tRNA + H2O = an N-acyl-L-amino acid + a tRNA + H(+). Its function is as follows. Hydrolyzes ribosome-free peptidyl-tRNAs (with 1 or more amino acids incorporated), which drop off the ribosome during protein synthesis, or as a result of ribosome stalling. Functionally, catalyzes the release of premature peptidyl moieties from peptidyl-tRNA molecules trapped in stalled 50S ribosomal subunits, and thus maintains levels of free tRNAs and 50S ribosomes. In Coxiella burnetii (strain CbuG_Q212) (Coxiella burnetii (strain Q212)), this protein is Peptidyl-tRNA hydrolase.